We begin with the raw amino-acid sequence, 115 residues long: Nucleoid-associated protein Pro_0020 (115 aa).

This sequence belongs to the YbaB/EbfC family. As to quaternary structure, homodimer.

It is found in the cytoplasm. Its subcellular location is the nucleoid. In terms of biological role, binds to DNA and alters its conformation. May be involved in regulation of gene expression, nucleoid organization and DNA protection. The chain is Nucleoid-associated protein Pro_0020 from Prochlorococcus marinus (strain SARG / CCMP1375 / SS120).